A 340-amino-acid polypeptide reads, in one-letter code: MMKVKVAINGYGTIGKRVADAVSLQDDMEVVGVTKTRPDFEAKLGAKRYPLYVAKPENVELFERAGIEIQGTIEDLLPKADIVVDCSPNKVGAENKAKYYEKAGIKAIFQGGEKKDVAEVSFNALANYDEAVGKSYVRVVSCNTTGLTRLIYMLKTNFSIGRIRATMLRRVVDPKEDKKGLVNGIMPDPVAIPSHHGPDVKTVLPDVDIVTTAFKLPTTLMHVHSLCVEMREAVKAEDVVSALSEEPRIMLISAEDGFTSTAKVIEFARELRLRYDLYENIVWRESIGVDGNDLFVTQAVHQEAIVVPENIDAIRAMFELAEKEESIRKTNESLGIGKVF.

Residues 13-14 (TI) and Gly112 contribute to the NAD(+) site. D-glyceraldehyde 3-phosphate is bound at residue 141 to 143 (SCN). The active-site Nucleophile is the Cys142. Arg170 serves as a coordination point for NAD(+). Residue 196-197 (HG) participates in D-glyceraldehyde 3-phosphate binding. NAD(+) is bound at residue Gln302.

Belongs to the glyceraldehyde-3-phosphate dehydrogenase family. Homotetramer.

Its subcellular location is the cytoplasm. The enzyme catalyses D-glyceraldehyde 3-phosphate + phosphate + NADP(+) = (2R)-3-phospho-glyceroyl phosphate + NADPH + H(+). It carries out the reaction D-glyceraldehyde 3-phosphate + phosphate + NAD(+) = (2R)-3-phospho-glyceroyl phosphate + NADH + H(+). The protein operates within carbohydrate degradation; glycolysis; pyruvate from D-glyceraldehyde 3-phosphate: step 1/5. In Archaeoglobus fulgidus (strain ATCC 49558 / DSM 4304 / JCM 9628 / NBRC 100126 / VC-16), this protein is Glyceraldehyde-3-phosphate dehydrogenase (gap).